Here is a 581-residue protein sequence, read N- to C-terminus: Neither inactivation nor afterpotential protein G (581 aa).

The first 26 residues, 1-26 (MGMKFQKILVLAGIVIGFLSIIVVLA), serve as a signal peptide directing secretion. 48–77 (DYVIVGGGTGGSTLTSLLAKNSNGSVLLIE) serves as a coordination point for FAD. N-linked (GlcNAc...) asparagine glycosylation is found at Asn-70, Asn-156, Asn-404, and Asn-464. His-516 (proton acceptor) is an active-site residue.

This sequence belongs to the GMC oxidoreductase family. FAD serves as cofactor.

The protein localises to the secreted. In terms of biological role, oxidoreductase involved in biosynthesis of 3-hydroxyretinal, a chromophore for rhodopsin Rh1. Not responsible for the initial hydroxylation of the retinal ring but rather acts in a subsequent step in chromophore production. May catalyze the conversion of (3R)-3-hydroxyretinol to the 3S enantiomer. The polypeptide is Neither inactivation nor afterpotential protein G (ninaG) (Drosophila melanogaster (Fruit fly)).